The sequence spans 315 residues: 4-hydroxy-3-methylbut-2-enyl diphosphate reductase (315 aa).

Cys-12 lines the [4Fe-4S] cluster pocket. Residues His-41 and His-74 each coordinate (2E)-4-hydroxy-3-methylbut-2-enyl diphosphate. Dimethylallyl diphosphate contacts are provided by His-41 and His-74. Residues His-41 and His-74 each contribute to the isopentenyl diphosphate site. Residue Cys-96 coordinates [4Fe-4S] cluster. His-124 is a binding site for (2E)-4-hydroxy-3-methylbut-2-enyl diphosphate. Dimethylallyl diphosphate is bound at residue His-124. Residue His-124 participates in isopentenyl diphosphate binding. Residue Glu-126 is the Proton donor of the active site. Thr-168 provides a ligand contact to (2E)-4-hydroxy-3-methylbut-2-enyl diphosphate. Residue Cys-198 participates in [4Fe-4S] cluster binding. The (2E)-4-hydroxy-3-methylbut-2-enyl diphosphate site is built by Ser-226, Ser-227, Asn-228, and Ser-270. Residues Ser-226, Ser-227, Asn-228, and Ser-270 each contribute to the dimethylallyl diphosphate site. Residues Ser-226, Ser-227, Asn-228, and Ser-270 each coordinate isopentenyl diphosphate.

Belongs to the IspH family. The cofactor is [4Fe-4S] cluster.

It carries out the reaction isopentenyl diphosphate + 2 oxidized [2Fe-2S]-[ferredoxin] + H2O = (2E)-4-hydroxy-3-methylbut-2-enyl diphosphate + 2 reduced [2Fe-2S]-[ferredoxin] + 2 H(+). The enzyme catalyses dimethylallyl diphosphate + 2 oxidized [2Fe-2S]-[ferredoxin] + H2O = (2E)-4-hydroxy-3-methylbut-2-enyl diphosphate + 2 reduced [2Fe-2S]-[ferredoxin] + 2 H(+). The protein operates within isoprenoid biosynthesis; dimethylallyl diphosphate biosynthesis; dimethylallyl diphosphate from (2E)-4-hydroxy-3-methylbutenyl diphosphate: step 1/1. It participates in isoprenoid biosynthesis; isopentenyl diphosphate biosynthesis via DXP pathway; isopentenyl diphosphate from 1-deoxy-D-xylulose 5-phosphate: step 6/6. Functionally, catalyzes the conversion of 1-hydroxy-2-methyl-2-(E)-butenyl 4-diphosphate (HMBPP) into a mixture of isopentenyl diphosphate (IPP) and dimethylallyl diphosphate (DMAPP). Acts in the terminal step of the DOXP/MEP pathway for isoprenoid precursor biosynthesis. The chain is 4-hydroxy-3-methylbut-2-enyl diphosphate reductase from Pseudomonas syringae pv. syringae (strain B728a).